Consider the following 192-residue polypeptide: Fe/S biogenesis protein NfuA (192 aa).

[4Fe-4S] cluster contacts are provided by Cys-149 and Cys-152.

Belongs to the NfuA family. In terms of assembly, homodimer. Requires [4Fe-4S] cluster as cofactor.

Functionally, involved in iron-sulfur cluster biogenesis. Binds a 4Fe-4S cluster, can transfer this cluster to apoproteins, and thereby intervenes in the maturation of Fe/S proteins. Could also act as a scaffold/chaperone for damaged Fe/S proteins. The chain is Fe/S biogenesis protein NfuA from Aeromonas hydrophila subsp. hydrophila (strain ATCC 7966 / DSM 30187 / BCRC 13018 / CCUG 14551 / JCM 1027 / KCTC 2358 / NCIMB 9240 / NCTC 8049).